A 56-amino-acid polypeptide reads, in one-letter code: Large ribosomal subunit protein bL32 (56 aa).

A disordered region spans residues 1–36; sequence MAVQQNKKSRSKRGMRRSHDALSTAQLSVDATSGEV. Over residues 7-16 the composition is skewed to basic residues; it reads KKSRSKRGMR. Positions 21 to 31 are enriched in polar residues; it reads ALSTAQLSVDA.

This sequence belongs to the bacterial ribosomal protein bL32 family.

This chain is Large ribosomal subunit protein bL32, found in Shewanella oneidensis (strain ATCC 700550 / JCM 31522 / CIP 106686 / LMG 19005 / NCIMB 14063 / MR-1).